The following is a 73-amino-acid chain: Large ribosomal subunit protein uL24 (73 aa).

Residues asparagine 53 to methionine 65 show a composition bias toward basic and acidic residues. Residues asparagine 53 to alanine 73 form a disordered region.

Belongs to the universal ribosomal protein uL24 family. Part of the 50S ribosomal subunit.

Its function is as follows. One of two assembly initiator proteins, it binds directly to the 5'-end of the 23S rRNA, where it nucleates assembly of the 50S subunit. In terms of biological role, one of the proteins that surrounds the polypeptide exit tunnel on the outside of the subunit. The polypeptide is Large ribosomal subunit protein uL24 (Helicobacter pylori (strain J99 / ATCC 700824) (Campylobacter pylori J99)).